A 570-amino-acid polypeptide reads, in one-letter code: Urease subunit alpha (570 aa).

One can recognise a Urease domain in the interval 131 to 570; that stretch reads GGIDSHIHFI…LPMTQRYFLF (440 aa). Ni(2+) contacts are provided by His-136, His-138, and Lys-219. An N6-carboxylysine modification is found at Lys-219. His-221 contributes to the substrate binding site. Positions 248 and 274 each coordinate Ni(2+). Catalysis depends on His-322, which acts as the Proton donor. Asp-362 is a binding site for Ni(2+).

The protein belongs to the metallo-dependent hydrolases superfamily. Urease alpha subunit family. As to quaternary structure, heterotrimer of UreA (gamma), UreB (beta) and UreC (alpha) subunits. Three heterotrimers associate to form the active enzyme. It depends on Ni cation as a cofactor. Carboxylation allows a single lysine to coordinate two nickel ions.

It localises to the cytoplasm. It carries out the reaction urea + 2 H2O + H(+) = hydrogencarbonate + 2 NH4(+). Its pathway is nitrogen metabolism; urea degradation; CO(2) and NH(3) from urea (urease route): step 1/1. This Trichodesmium erythraeum (strain IMS101) protein is Urease subunit alpha.